A 276-amino-acid chain; its full sequence is S-adenosylmethionine decarboxylase proenzyme (276 aa).

The Schiff-base intermediate with substrate; via pyruvic acid role is filled by S126. At S126 the chain carries Pyruvic acid (Ser); by autocatalysis. The active-site Proton acceptor; for processing activity is H131. Catalysis depends on C154, which acts as the Proton donor; for catalytic activity.

It belongs to the prokaryotic AdoMetDC family. Type 2 subfamily. As to quaternary structure, heterooctamer of four alpha and four beta chains arranged as a tetramer of alpha/beta heterodimers. The cofactor is pyruvate. In terms of processing, is synthesized initially as an inactive proenzyme. Formation of the active enzyme involves a self-maturation process in which the active site pyruvoyl group is generated from an internal serine residue via an autocatalytic post-translational modification. Two non-identical subunits are generated from the proenzyme in this reaction, and the pyruvate is formed at the N-terminus of the alpha chain, which is derived from the carboxyl end of the proenzyme. The post-translation cleavage follows an unusual pathway, termed non-hydrolytic serinolysis, in which the side chain hydroxyl group of the serine supplies its oxygen atom to form the C-terminus of the beta chain, while the remainder of the serine residue undergoes an oxidative deamination to produce ammonia and the pyruvoyl group blocking the N-terminus of the alpha chain.

The enzyme catalyses S-adenosyl-L-methionine + H(+) = S-adenosyl 3-(methylsulfanyl)propylamine + CO2. It participates in amine and polyamine biosynthesis; S-adenosylmethioninamine biosynthesis; S-adenosylmethioninamine from S-adenosyl-L-methionine: step 1/1. In terms of biological role, catalyzes the decarboxylation of S-adenosylmethionine to S-adenosylmethioninamine (dcAdoMet), the propylamine donor required for the synthesis of the polyamines spermine and spermidine from the diamine putrescine. This Alcanivorax borkumensis (strain ATCC 700651 / DSM 11573 / NCIMB 13689 / SK2) protein is S-adenosylmethionine decarboxylase proenzyme.